The following is a 314-amino-acid chain: Transmembrane protein 178B (314 aa).

Residues 1 to 24 (MRLLAGAGLCLALAALALLAVALS) form the signal peptide. A disordered region spans residues 32–83 (DARRHRDRCRKPGGKRNDPGYMYTPGQHLPLRGEPPSSRIRSPRGGEPGGVR). Over residues 36–45 (HRDRCRKPGG) the composition is skewed to basic residues. The next 3 membrane-spanning stretches (helical) occupy residues 194-214 (AGFIGMAVSIILFGWMVGVLG), 228-248 (LLFLMGGTCCIISLCTCVAGI), and 274-294 (MFCAWGGLGLTLLSGFLCTLA).

The protein belongs to the TMEM178 family.

Its subcellular location is the membrane. In Xenopus tropicalis (Western clawed frog), this protein is Transmembrane protein 178B (tmem178b).